The sequence spans 222 residues: Ribosomal RNA small subunit methyltransferase G (222 aa).

Residues Gly73, Leu78, 124–125 (AE), and Arg137 contribute to the S-adenosyl-L-methionine site.

It belongs to the methyltransferase superfamily. RNA methyltransferase RsmG family.

The protein resides in the cytoplasm. In terms of biological role, specifically methylates the N7 position of guanine in position 518 of 16S rRNA. The chain is Ribosomal RNA small subunit methyltransferase G from Acidothermus cellulolyticus (strain ATCC 43068 / DSM 8971 / 11B).